The sequence spans 193 residues: Probable DNA-directed RNA polymerase subunit delta (193 aa).

One can recognise an HTH HARE-type domain in the interval 14-83; the sequence is LSMIEVARAI…GENKWGLRSW (70 aa). 2 stretches are compositionally biased toward acidic residues: residues 117 to 134 and 142 to 193; these read GDDDAIDYGHDDPEDEDN and EYDD…VVDE. Residues 117–193 are disordered; sequence GDDDAIDYGH…EYSDEEVVDE (77 aa).

The protein belongs to the RpoE family. As to quaternary structure, RNAP is composed of a core of 2 alpha, a beta and a beta' subunits. The core is associated with a delta subunit and one of several sigma factors.

Its function is as follows. Participates in both the initiation and recycling phases of transcription. In the presence of the delta subunit, RNAP displays an increased specificity of transcription, a decreased affinity for nucleic acids, and an increased efficiency of RNA synthesis because of enhanced recycling. In Streptococcus suis (strain 05ZYH33), this protein is Probable DNA-directed RNA polymerase subunit delta.